The following is a 250-amino-acid chain: tRNA (guanine-N(1)-)-methyltransferase (250 aa).

Residues Gly-115 and 135–140 contribute to the S-adenosyl-L-methionine site; that span reads LGDFVL.

Belongs to the RNA methyltransferase TrmD family. In terms of assembly, homodimer.

The protein localises to the cytoplasm. The catalysed reaction is guanosine(37) in tRNA + S-adenosyl-L-methionine = N(1)-methylguanosine(37) in tRNA + S-adenosyl-L-homocysteine + H(+). Functionally, specifically methylates guanosine-37 in various tRNAs. This is tRNA (guanine-N(1)-)-methyltransferase from Legionella pneumophila (strain Paris).